The sequence spans 2191 residues: FRAS1-related extracellular matrix protein 1 (2191 aa).

An N-terminal signal peptide occupies residues 1–29 (MHSPGCTGPKAQWFLLLQLLLLHLDRVSA). Positions 205 to 207 (RGD) match the Cell attachment site motif. CSPG repeat units lie at residues 300-394 (VPRA…MELE), 419-506 (APRV…FRIF), and 527-621 (PPFL…FVLW). Residue asparagine 341 is glycosylated (N-linked (GlcNAc...) asparagine). N-linked (GlcNAc...) asparagine glycans are attached at residues asparagine 566 and asparagine 628. CSPG repeat units lie at residues 648–779 (KEAP…VSVS), 801–892 (QVPE…LEVT), and 912–1007 (EPPI…LVVS). The N-linked (GlcNAc...) asparagine glycan is linked to asparagine 1039. CSPG repeat units follow at residues 1049-1151 (PPSI…VYAT), 1172-1273 (EAPD…IQLS), 1294-1391 (TPTL…FYLW), 1412-1504 (GDIV…FTIS), 1525-1614 (LPVL…FLAT), and 1650-1742 (HLHS…FQAM). A glycan (N-linked (GlcNAc...) asparagine) is linked at asparagine 1180. A glycan (N-linked (GlcNAc...) asparagine) is linked at asparagine 1584. The 100-residue stretch at 1749 to 1848 (ATPQSLDLRW…DDEVFEVILN (100 aa)) folds into the Calx-beta domain. Residues 1874-1921 (HPSNSFNQSKHSTWGKGPWHPLPSGSSSLTTSGSPLLERPPPSFTSGD) are disordered. Over residues 1875–1885 (PSNSFNQSKHS) the composition is skewed to polar residues. Residues 1895–1910 (LPSGSSSLTTSGSPLL) are compositionally biased toward low complexity. The 115-residue stretch at 2072–2186 (HSGYCHILVT…CSKGKAHNFV (115 aa)) folds into the C-type lectin domain. Cysteine 2163 and cysteine 2177 form a disulfide bridge.

This sequence belongs to the FRAS1 family. As to quaternary structure, interacts with FREM2. Expressed in epidermis and hair follicles. Expressed in many developing epidermal appendages, including the whisker and sensory vibrissae, cranial and trunk hair follicles, meibomian glands, teeth, footpads, eyelash primordia and invaginating mammary glands. Limb expression localizes to sheets of dermal cells on the apical and basal surfaces of the digits but, unlike FRAS1, is excluded from the apical ectodermal ridge. Usually expressed at higher level in dermal cells underlying the differentiating epithelial components, especially underlying the epidermis of the head, limbs, and eyelids. Expression in the eyelid dermis is apparent as early as 13 dpc. Postnatal expression in the skin is limited to the dermal papillae. In the kidney, it is expressed from 12.5 dpc in the mesenchyme surrounding the branching ureteric tree, with a strong expression in the more proximal regions of these tubules rather than at the proliferating and branching ends of the ureteric buds. In hair follicle, it is selectively expressed in the vibrissal hair primordia during development. Preferentially expressed in the whisker pad epithelia of 12.5 dpc embryos, in both the epithelial and mesenchymal cells of developing hair follicles. In the early stages of hair follicle development (i.e. stages 0-1), it is expressed in both hair placodes and dermal condensations. In stage 2, it is detected in dermal condensations and adjacent epithelia, but not in the upper region of the hair follicles. Expressed at the tip of developing hair follicles in the later stages (i.e. stages 3-5).

It is found in the secreted. The protein localises to the extracellular space. The protein resides in the extracellular matrix. Its subcellular location is the basement membrane. Functionally, extracellular matrix protein that plays a role in epidermal differentiation and is required for epidermal adhesion during embryonic development. The polypeptide is FRAS1-related extracellular matrix protein 1 (Frem1) (Mus musculus (Mouse)).